Consider the following 305-residue polypeptide: Putative monooxygenase p33MONOX (305 aa).

Residues 37 to 56 (LEDPAPMTPPPSDMGSVPWK) are disordered. T44 is subject to Phosphothreonine. Positions 67-77 (LAKVEEGEASL) match the Flavin-containing monooxygenase motif motif. Disordered regions lie at residues 158–236 (QSGE…KYDS) and 259–305 (QANR…PTGF). The segment covering 169-183 (PASAQSTPSTTPHSS) has biased composition (low complexity). T175 carries the phosphothreonine modification. Phosphoserine is present on residues S182 and S183. Positions 193–210 (TSGSSTALPGPNPSTMDS) are enriched in polar residues.

This sequence belongs to the P33MONOX family. In terms of assembly, interacts with NELFB, NOL12 and PRNP. Down-regulated in the occipital lobe of an early stage Alzheimer disease patients.

It is found in the cytoplasm. Potential NADPH-dependent oxidoreductase. May be involved in the regulation of neuronal survival, differentiation and axonal outgrowth. The polypeptide is Putative monooxygenase p33MONOX (KIAA1191) (Homo sapiens (Human)).